A 287-amino-acid chain; its full sequence is Undecaprenyl-diphosphatase (287 aa).

7 consecutive transmembrane segments (helical) span residues 6 to 26 (LHLL…FIPV), 45 to 65 (SGKV…MWIF), 89 to 109 (NLLL…KSIK), 111 to 131 (VFYH…IMLW), 204 to 224 (ATEF…VYDL), 238 to 258 (AIAV…RAVL), and 266 to 286 (YRVF…WIYA).

Belongs to the UppP family.

It localises to the cell inner membrane. The catalysed reaction is di-trans,octa-cis-undecaprenyl diphosphate + H2O = di-trans,octa-cis-undecaprenyl phosphate + phosphate + H(+). Its function is as follows. Catalyzes the dephosphorylation of undecaprenyl diphosphate (UPP). Confers resistance to bacitracin. This Bordetella pertussis (strain Tohama I / ATCC BAA-589 / NCTC 13251) protein is Undecaprenyl-diphosphatase.